Here is a 280-residue protein sequence, read N- to C-terminus: uncharacterized protein (280 aa).

The 113-residue stretch at 96-208 (DKSIGIFQRF…GYLSTPPPVK (113 aa)) folds into the DUF1279 domain. The chain crosses the membrane as a helical span at residues 115-135 (VMVPVHIVTSTVWFGSFYYAA). The stretch at 207-274 (VKEFLQDKME…KLQETKDKMS (68 aa)) forms a coiled coil. Residues 245 to 280 (SERMEETKERFSETKDKFSEKLQETKDKMSFRKKAD) form a disordered region.

It localises to the membrane. This is an uncharacterized protein from Danio rerio (Zebrafish).